The sequence spans 257 residues: Global transcriptional regulator CodY (257 aa).

A GAF domain region spans residues M1–L155. Residues A203–R222 constitute a DNA-binding region (H-T-H motif).

This sequence belongs to the CodY family.

It localises to the cytoplasm. DNA-binding global transcriptional regulator which is involved in the adaptive response to starvation and acts by directly or indirectly controlling the expression of numerous genes in response to nutrient availability. During rapid exponential growth, CodY is highly active and represses genes whose products allow adaptation to nutrient depletion. This chain is Global transcriptional regulator CodY, found in Staphylococcus epidermidis (strain ATCC 12228 / FDA PCI 1200).